We begin with the raw amino-acid sequence, 270 residues long: (+)-cis,cis-nepetalactol synthase NEPS3 (270 aa).

Residues 21 to 27 (GGASGIG), 46 to 48 (DIQ), 70 to 71 (DV), N97, 165 to 169 (YVMSK), and 198 to 202 (VATPL) contribute to the NAD(+) site.

This sequence belongs to the short-chain dehydrogenases/reductases (SDR) family. As to quaternary structure, forms homotetramers.

The enzyme catalyses (S)-8-oxocitronellyl enol = cis-cis-nepetalactol. Its function is as follows. Functions as a non-oxidoreductive cyclase to promote the formation of cis-cis-nepetalactol. Cis-cis-nepetalactol is then oxidized by NEPS1 into cis-cis-nepetalactone, which belongs to a family of metabolites that are both insect-repellent and have euphoric effect in cats. Binds NAD(+) as classical short-chain dehydrogenase/reductase (SDR), but does not utilize it for its redox-neutral cyclase activity. The sequence is that of (+)-cis,cis-nepetalactol synthase NEPS3 from Nepeta racemosa (Catmint).